We begin with the raw amino-acid sequence, 330 residues long: Ketol-acid reductoisomerase (NADP(+)) (330 aa).

Positions 2 to 182 constitute a KARI N-terminal Rossmann domain; sequence ARMYYDEDAN…GGTRAGVLET (181 aa). NADP(+) contacts are provided by residues 25-28, S51, S53, and 83-86; these read YGSQ and DEVQ. The active site involves H108. NADP(+) is bound at residue G134. One can recognise a KARI C-terminal knotted domain in the interval 183-328; the sequence is TFREETETDL…QDLRAMMSWL (146 aa). Residues D191, E195, E227, and E231 each contribute to the Mg(2+) site. S252 contributes to the substrate binding site.

Belongs to the ketol-acid reductoisomerase family. The cofactor is Mg(2+).

The enzyme catalyses (2R)-2,3-dihydroxy-3-methylbutanoate + NADP(+) = (2S)-2-acetolactate + NADPH + H(+). It catalyses the reaction (2R,3R)-2,3-dihydroxy-3-methylpentanoate + NADP(+) = (S)-2-ethyl-2-hydroxy-3-oxobutanoate + NADPH + H(+). It functions in the pathway amino-acid biosynthesis; L-isoleucine biosynthesis; L-isoleucine from 2-oxobutanoate: step 2/4. Its pathway is amino-acid biosynthesis; L-valine biosynthesis; L-valine from pyruvate: step 2/4. In terms of biological role, involved in the biosynthesis of branched-chain amino acids (BCAA). Catalyzes an alkyl-migration followed by a ketol-acid reduction of (S)-2-acetolactate (S2AL) to yield (R)-2,3-dihydroxy-isovalerate. In the isomerase reaction, S2AL is rearranged via a Mg-dependent methyl migration to produce 3-hydroxy-3-methyl-2-ketobutyrate (HMKB). In the reductase reaction, this 2-ketoacid undergoes a metal-dependent reduction by NADPH to yield (R)-2,3-dihydroxy-isovalerate. In Microcystis aeruginosa (strain NIES-843 / IAM M-2473), this protein is Ketol-acid reductoisomerase (NADP(+)).